An 804-amino-acid chain; its full sequence is MISHYPLASLLPWPPVPQLLDIDGDGGVALQRYQPRSPETGPRYWSSVQDWGEEVEEGAIYNVTLKRVQIQQAANKGARWLGAEGDRLPPGHTVSQLETCKIRSIRAGTLERLVETLLTAFGDNDLTYTSIFLSTYRAFASTQSVLELLLDRYGSFEDCEGERSQCQTGESRKAVRKALASILRAWLDQCPEDFQEPPSYPSLHRVLGFLQKAMPGSEPMRRAQSLLEQLRVQASLENETEGGFQCINPFCLGEDEEVEIDLQEDFFSFEVDLVAEQLTYMDALLFKKVVPHHCLGSIWSQRDKKDGKQSAPTIRATITQFNAVTACVVSTILRQRQIRPHLCARIIQRWIDIAQECRIRKNFSSLRAIVSALQSNPLYRLKRTWASVAKDSMQMFEELSDIFSDQNNYLTSRELLMREGTSKFASLDSCAKDHQKRSQKRLQLQKDMGAMQGTIPYLGTFLTDLTMLDTALPDQVEGGLINFEKRRREFEVIAQIKLLQSACNSYCLTPDPAFFRWFKSQPQYSEEESYVLSCEVEGLGDNSPTSPKPRKSMVKRLSLLFLGNDSTNTSSPVRESPRSPPTGSSGESMDSVSVSSSDSSPSESDGMTPTHSIDAHLKKLSESSSCNSLHSMDTSSSTASASISLASPTLPGPPCNHRRSISLTPLMSPTSPGFPPAYNTQAQDACIIRVSLEQGNGNLYKSIMLTSQDKTPAVISRAMTKHNLEGEQAADYELVQVISEERELVIPDNANVFYAMSTSANFDFLLRLRGSEGRPVQLRSRCSSTLPRTQQRSSLSLRLSKVTL.

In terms of domain architecture, N-terminal Ras-GEF spans 101–231; the sequence is KIRSIRAGTL…RAQSLLEQLR (131 aa). The 270-residue stretch at 270–539 folds into the Ras-GEF domain; it reads EVDLVAEQLT…YVLSCEVEGL (270 aa). Disordered stretches follow at residues 564–611 and 640–676; these read NDST…TPTH and SASI…GFPP. Composition is skewed to low complexity over residues 581 to 607 and 640 to 649; these read PTGS…SDGM and SASISLASPT. The span at 661-671 shows a compositional bias: polar residues; the sequence is ISLTPLMSPTS. The region spanning 684–771 is the Ras-associating domain; it reads DACIIRVSLE…FDFLLRLRGS (88 aa).

In terms of biological role, probable guanine nucleotide exchange factor. This Danio rerio (Zebrafish) protein is Ral guanine nucleotide dissociation stimulator-like 1 (rgl1).